Here is a 397-residue protein sequence, read N- to C-terminus: Serpin B10 (397 aa).

A Nuclear localization signal motif is present at residues 74-77 (KKRK).

This sequence belongs to the serpin family. Ov-serpin subfamily.

The protein resides in the nucleus. Its subcellular location is the cytoplasm. Protease inhibitor that may play a role in the regulation of protease activities during hematopoiesis and apoptosis induced by TNF. May regulate protease activities in the cytoplasm and in the nucleus. This is Serpin B10 (Serpinb10) from Mus musculus (Mouse).